The following is a 212-amino-acid chain: Thymidylate kinase (212 aa).

Residues 16-21 (RAGKTT), R97, R182, and K192 each bind ATP.

This sequence belongs to the thymidylate kinase family. It depends on Mg(2+) as a cofactor.

The enzyme catalyses dTMP + ATP = dTDP + ADP. It participates in pyrimidine metabolism; dTTP biosynthesis. In terms of biological role, catalyzes the phosphorylation of thymidine monophosphate (dTMP) to thymidine diphosphate (dTDP), the immediate precursor for the DNA building block dTTP, with ATP as the preferred phosphoryl donor in the presence of Mg(2+). This chain is Thymidylate kinase (dtymk), found in Danio rerio (Zebrafish).